The chain runs to 100 residues: Large ribosomal subunit protein uL23 (100 aa).

It belongs to the universal ribosomal protein uL23 family. In terms of assembly, part of the 50S ribosomal subunit. Contacts protein L29, and trigger factor when it is bound to the ribosome.

In terms of biological role, one of the early assembly proteins it binds 23S rRNA. One of the proteins that surrounds the polypeptide exit tunnel on the outside of the ribosome. Forms the main docking site for trigger factor binding to the ribosome. In Mycolicibacterium vanbaalenii (strain DSM 7251 / JCM 13017 / BCRC 16820 / KCTC 9966 / NRRL B-24157 / PYR-1) (Mycobacterium vanbaalenii), this protein is Large ribosomal subunit protein uL23.